Reading from the N-terminus, the 990-residue chain is Serine/threonine-protein kinase ATG1 (990 aa).

The 320-residue stretch at 15–334 folds into the Protein kinase domain; the sequence is FVIENEIGKG…FDDFFASPVI (320 aa). Residues 21 to 29 and Lys44 each bind ATP; that span reads IGKGSFAVV. Catalysis depends on Asp165, which acts as the Proton acceptor. Positions 375–408 are enriched in polar residues; sequence VSSIEASTQQPGVQPPVSTATSPPALESRSTQEA. Disordered regions lie at residues 375-499, 529-566, 579-614, 750-784, and 970-990; these read VSSI…GGED, SRLG…TILS, ASTG…QGGQ, LSQE…SSSS, and SPVG…TESP. Composition is skewed to low complexity over residues 529–554 and 587–613; these read SRLG…SAPG and PPGS…RQGG. Polar residues predominate over residues 750 to 771; the sequence is LSQELDSSTATSGISPSRNSVQ. Over residues 772–784 the composition is skewed to low complexity; that stretch reads GSARRVGSISSSS.

The protein belongs to the protein kinase superfamily. Ser/Thr protein kinase family. APG1/unc-51/ULK1 subfamily. In terms of assembly, homodimer. Forms a ternary complex with ATG13 and ATG17.

It localises to the cytoplasm. Its subcellular location is the preautophagosomal structure membrane. It carries out the reaction L-seryl-[protein] + ATP = O-phospho-L-seryl-[protein] + ADP + H(+). The enzyme catalyses L-threonyl-[protein] + ATP = O-phospho-L-threonyl-[protein] + ADP + H(+). Serine/threonine protein kinase involved in the cytoplasm to vacuole transport (Cvt) and found to be essential in autophagy, where it is required for the formation of autophagosomes. Involved in the clearance of protein aggregates which cannot be efficiently cleared by the proteasome. Required for selective autophagic degradation of the nucleus (nucleophagy) as well as for mitophagy which contributes to regulate mitochondrial quantity and quality by eliminating the mitochondria to a basal level to fulfill cellular energy requirements and preventing excess ROS production. Also involved in endoplasmic reticulum-specific autophagic process, in selective removal of ER-associated degradation (ERAD) substrates. Plays a key role in ATG9 and ATG23 cycling through the pre-autophagosomal structure and is necessary to promote ATG18 binding to ATG9 through phosphorylation of ATG9. Catalyzes phosphorylation of ATG4, decreasing the interaction between ATG4 and ATG8 and impairing deconjugation of PE-conjugated forms of ATG8. Required for wild-type budding of haploid sporidia and for complete symptom development during pathogenic growth such as gall formation and teliospore production in ears of mature maize. The sequence is that of Serine/threonine-protein kinase ATG1 from Mycosarcoma maydis (Corn smut fungus).